The primary structure comprises 459 residues: Trichothecene 3-O-acetyltransferase TRI101 (459 aa).

Ca(2+) contacts are provided by Asp-218 and Ile-221. CoA contacts are provided by residues Lys-253, 266 to 269, Asp-302, Gln-318, and Arg-343; that span reads FVST. Residue Asp-376 participates in Ca(2+) binding. CoA contacts are provided by Ser-386 and Lys-390. Glu-449 contributes to the Ca(2+) binding site.

This sequence belongs to the trichothecene 3-O-acetyltransferase family.

Its pathway is sesquiterpene biosynthesis; trichothecene biosynthesis. In terms of biological role, 3-O-acetyltransferase involved in the biosynthesis of trichothecenes, a very large family of chemically related bicyclic sesquiterpene compounds acting as mycotoxins, including T2-toxin. The biosynthesis of trichothecenes begins with the cyclization of farnesyl diphosphate to trichodiene and is catalyzed by the trichodiene synthase TRI5. Trichodiene undergoes a series of oxygenations catalyzed by the cytochrome P450 monooxygenase TRI4. TRI4 controls the addition of four oxygens at C-2, C-3, C-11, and the C-12, C-13-epoxide to form the intermediate isotrichotriol. Isotrichotriol then undergoes a non-enzymatic isomerization and cyclization to form isotrichodermol. During this process, the oxygen at the C-2 position becomes the pyran ring oxygen and the hydroxyl group at C-11 is lost. More complex type A trichothecenes are built by modifying isotrichodermol through a series of paired hydroxylation and acetylation or acylation steps. Isotrichodermol is converted to isotrichodermin by the acetyltransferase TRI101. TRI101 encodes a C-3 transacetylase that acts as a self-protection or resistance factor during biosynthesis and that the presence of a free C-3 hydroxyl group is a key component of Fusarium trichothecene phytotoxicity. A second hydroxyl group is added to C-15 by the trichothecene C-15 hydroxylase TRI11, producing 15-decalonectrin, which is then acetylated by TRI3, producing calonectrin. A third hydroxyl group is added at C-4 by the cytochrome P450 monooxygenase TRI13, converting calonectrin to 3,15-diacetoxyspirpenol, which is subsequently acetylated bythe acetyltransferase TRI7. A fourth hydroxyl group is added to C-8 by the cytochrome P450 monooxygenase TRI1, followed by the addition of an isovaleryl moiety by TRI16. Finally, the acetyl group is removed from the C-3 position by the trichothecene C-3 esterase TRI8 to produce T-2 toxin. The sequence is that of Trichothecene 3-O-acetyltransferase TRI101 from Fusarium sporotrichioides.